The chain runs to 547 residues: G protein-coupled receptor associated sorting protein 3 (547 aa).

Basic residues-rich tracts occupy residues Met-1–Ala-10 and Ala-38–Thr-48. A disordered region spans residues Met-1–Asp-53.

The protein belongs to the GPRASP family. In terms of assembly, homodimer.

The protein localises to the cytoplasm. Its subcellular location is the nucleus. Functionally, survival and differentiation promoting protein that plays a role in the regulation of neurosynaptogenesis. Induces phosphatase PP2A activity which results in APP dephosphorylation and inhibits BACE1-mediated processing of APP. The protein is G protein-coupled receptor associated sorting protein 3 (GPRASP3) of Macaca fascicularis (Crab-eating macaque).